The sequence spans 488 residues: MSTPVANASASSMPELLNNPVTIPAVMFIFGVVGNLVAIVVLCKSRKEQKETTFYTLVCGLAVTDLLGTLLVSPVTIATYMKGQWPGGQALCDYSTFILLFFGLSGLSIICAMSIERYLAINHAYFYSHYVDKRLAGLTLFAVYASNVLFCALPNMGLGRSRLQFPDTWCFIDWRTNVTAHAAFSYMYAGFSSFLILATVLCNVLVCGALLRMHRQFMRRTSLGTEQHHAAAAAAVTSAACRGHPTASPALPRLSDFRRRRSFRRIAGAEIQMVILLIATSLVVLICSIPLVVRVFINQLYQPDLVREISQNPDLQAIRIASVNPILDPWIYILLRKTVLSKAIEKIKCLFCRIGGSRRDRSGQHCSDSRRTSSAMSTHSRSFLSRELKEISSTSQTLLYLPELSENSLAGRNLLPGVPLVGLAQADTTSLRTWRGSETSDSSQGQDSESVLLVDEVGGGGRAGPTPKGSSLQVTFPSETLNLSEKCI.

Topologically, residues 1-19 (MSTPVANASASSMPELLNN) are extracellular. The N-linked (GlcNAc...) asparagine glycan is linked to asparagine 7. A helical transmembrane segment spans residues 20-43 (PVTIPAVMFIFGVVGNLVAIVVLC). Residues 44 to 55 (KSRKEQKETTFY) are Cytoplasmic-facing. The chain crosses the membrane as a helical span at residues 56–79 (TLVCGLAVTDLLGTLLVSPVTIAT). Residues 80–96 (YMKGQWPGGQALCDYST) lie on the Extracellular side of the membrane. Residues cysteine 92 and cysteine 170 are joined by a disulfide bond. A helical transmembrane segment spans residues 97–115 (FILLFFGLSGLSIICAMSI). Over 116–135 (ERYLAINHAYFYSHYVDKRL) the chain is Cytoplasmic. The helical transmembrane segment at 136–160 (AGLTLFAVYASNVLFCALPNMGLGR) threads the bilayer. Over 161-184 (SRLQFPDTWCFIDWRTNVTAHAAF) the chain is Extracellular. Residue asparagine 177 is glycosylated (N-linked (GlcNAc...) asparagine). A helical transmembrane segment spans residues 185–211 (SYMYAGFSSFLILATVLCNVLVCGALL). Topologically, residues 212–270 (RMHRQFMRRTSLGTEQHHAAAAAAVTSAACRGHPTASPALPRLSDFRRRRSFRRIAGAE) are cytoplasmic. A helical transmembrane segment spans residues 271–298 (IQMVILLIATSLVVLICSIPLVVRVFIN). At 299-315 (QLYQPDLVREISQNPDL) the chain is on the extracellular side. Residues 316–335 (QAIRIASVNPILDPWIYILL) form a helical membrane-spanning segment. Residues 336-488 (RKTVLSKAIE…ETLNLSEKCI (153 aa)) lie on the Cytoplasmic side of the membrane. Over residues 358–371 (RRDRSGQHCSDSRR) the composition is skewed to basic and acidic residues. The disordered stretch occupies residues 358 to 381 (RRDRSGQHCSDSRRTSSAMSTHSR). Residues 372–381 (TSSAMSTHSR) show a composition bias toward polar residues. 4 positions are modified to phosphoserine: serine 377, serine 380, serine 382, and serine 385. The tract at residues 456-475 (EVGGGGRAGPTPKGSSLQVT) is disordered.

The protein belongs to the G-protein coupled receptor 1 family. Interacts with FEM1A. Phosphorylation mediates agonist-mediated desensitization by promoting cytoplasmic retention. In terms of tissue distribution, highly expressed in intestine, duodenal epithelium, uterus, thymus and adrenal cortex. Lower but significant expression in whole adrenal, lung, spleen, stomach, and kidney. In this latter organ, the receptor is localized in the glomeruli and the transitional epithelium of the renal calyx.

The protein resides in the cell membrane. Functionally, receptor for prostaglandin E2 (PGE2). The activity of this receptor is mediated by G(s) proteins that stimulate adenylate cyclase. Has a relaxing effect on smooth muscle. May play an important role in regulating renal hemodynamics, intestinal epithelial transport, adrenal aldosterone secretion, and uterine function. This Oryctolagus cuniculus (Rabbit) protein is Prostaglandin E2 receptor EP4 subtype (PTGER4).